Here is a 285-residue protein sequence, read N- to C-terminus: NADPH-dependent 7-cyano-7-deazaguanine reductase (285 aa).

91 to 93 lines the substrate pocket; that stretch reads IES. Residue 93 to 94 participates in NADPH binding; that stretch reads SK. The active-site Thioimide intermediate is the C192. Residue D199 is the Proton donor of the active site. 231–232 is a substrate binding site; the sequence is HE. 260–261 serves as a coordination point for NADPH; the sequence is RG.

This sequence belongs to the GTP cyclohydrolase I family. QueF type 2 subfamily. Homodimer.

It is found in the cytoplasm. The enzyme catalyses 7-aminomethyl-7-carbaguanine + 2 NADP(+) = 7-cyano-7-deazaguanine + 2 NADPH + 3 H(+). It functions in the pathway tRNA modification; tRNA-queuosine biosynthesis. Its function is as follows. Catalyzes the NADPH-dependent reduction of 7-cyano-7-deazaguanine (preQ0) to 7-aminomethyl-7-deazaguanine (preQ1). The chain is NADPH-dependent 7-cyano-7-deazaguanine reductase from Psychromonas ingrahamii (strain DSM 17664 / CCUG 51855 / 37).